The chain runs to 274 residues: Large ribosomal subunit protein uL2 (274 aa).

The tract at residues 224–259 (AMNPVDHPHGGGEGRTSGGRHPVTPWGIPTKGYKTR) is disordered.

Belongs to the universal ribosomal protein uL2 family. Part of the 50S ribosomal subunit. Forms a bridge to the 30S subunit in the 70S ribosome.

One of the primary rRNA binding proteins. Required for association of the 30S and 50S subunits to form the 70S ribosome, for tRNA binding and peptide bond formation. It has been suggested to have peptidyltransferase activity; this is somewhat controversial. Makes several contacts with the 16S rRNA in the 70S ribosome. The chain is Large ribosomal subunit protein uL2 from Citrifermentans bemidjiense (strain ATCC BAA-1014 / DSM 16622 / JCM 12645 / Bem) (Geobacter bemidjiensis).